A 537-amino-acid polypeptide reads, in one-letter code: CTP synthase (537 aa).

The tract at residues 1-265 is amidoligase domain; it reads MVHFIFVTGG…DNKVLKFFNI (265 aa). CTP is bound at residue S13. S13 contacts UTP. ATP-binding positions include 14–19 and D71; that span reads SLGKGL. The Mg(2+) site is built by D71 and E139. CTP contacts are provided by residues 146 to 148 and K222; that span reads DIE. A UTP-binding site is contributed by K222. A Glutamine amidotransferase type-1 domain is found at 290 to 536; sequence RIAIIAKYHK…IKAAIEYNKC (247 aa). G352 contacts L-glutamine. The active-site Nucleophile; for glutamine hydrolysis is the C379. Residues 380–383, E403, and R464 each bind L-glutamine; that span reads FGMQ. Residues H509 and E511 contribute to the active site.

Belongs to the CTP synthase family. As to quaternary structure, homotetramer.

It catalyses the reaction UTP + L-glutamine + ATP + H2O = CTP + L-glutamate + ADP + phosphate + 2 H(+). It carries out the reaction L-glutamine + H2O = L-glutamate + NH4(+). The catalysed reaction is UTP + NH4(+) + ATP = CTP + ADP + phosphate + 2 H(+). It functions in the pathway pyrimidine metabolism; CTP biosynthesis via de novo pathway; CTP from UDP: step 2/2. Its activity is regulated as follows. Allosterically activated by GTP, when glutamine is the substrate; GTP has no effect on the reaction when ammonia is the substrate. The allosteric effector GTP functions by stabilizing the protein conformation that binds the tetrahedral intermediate(s) formed during glutamine hydrolysis. Inhibited by the product CTP, via allosteric rather than competitive inhibition. Its function is as follows. Catalyzes the ATP-dependent amination of UTP to CTP with either L-glutamine or ammonia as the source of nitrogen. Regulates intracellular CTP levels through interactions with the four ribonucleotide triphosphates. The chain is CTP synthase from Rickettsia rickettsii (strain Iowa).